A 95-amino-acid polypeptide reads, in one-letter code: Acylphosphatase (95 aa).

An Acylphosphatase-like domain is found at 5–93 (RAHVFIRGKV…GEFKDFKILP (89 aa)). Residues Arg-20 and Asn-38 contribute to the active site.

It belongs to the acylphosphatase family.

The enzyme catalyses an acyl phosphate + H2O = a carboxylate + phosphate + H(+). The chain is Acylphosphatase (acyP) from Pyrobaculum aerophilum (strain ATCC 51768 / DSM 7523 / JCM 9630 / CIP 104966 / NBRC 100827 / IM2).